Here is a 284-residue protein sequence, read N- to C-terminus: Bifunctional protein FolD (284 aa).

Residues 163-165 (GRS) and S188 contribute to the NADP(+) site.

The protein belongs to the tetrahydrofolate dehydrogenase/cyclohydrolase family. Homodimer.

It carries out the reaction (6R)-5,10-methylene-5,6,7,8-tetrahydrofolate + NADP(+) = (6R)-5,10-methenyltetrahydrofolate + NADPH. It catalyses the reaction (6R)-5,10-methenyltetrahydrofolate + H2O = (6R)-10-formyltetrahydrofolate + H(+). It participates in one-carbon metabolism; tetrahydrofolate interconversion. Functionally, catalyzes the oxidation of 5,10-methylenetetrahydrofolate to 5,10-methenyltetrahydrofolate and then the hydrolysis of 5,10-methenyltetrahydrofolate to 10-formyltetrahydrofolate. This Lactococcus lactis subsp. lactis (strain IL1403) (Streptococcus lactis) protein is Bifunctional protein FolD.